Here is an 89-residue protein sequence, read N- to C-terminus: Small ribosomal subunit protein uS15 (89 aa).

The segment at 1–24 (MSLDTTEKQQLINSHQTHATDTGS) is disordered. Residues 8 to 24 (KQQLINSHQTHATDTGS) show a composition bias toward polar residues.

Belongs to the universal ribosomal protein uS15 family. As to quaternary structure, part of the 30S ribosomal subunit. Forms a bridge to the 50S subunit in the 70S ribosome, contacting the 23S rRNA.

Its function is as follows. One of the primary rRNA binding proteins, it binds directly to 16S rRNA where it helps nucleate assembly of the platform of the 30S subunit by binding and bridging several RNA helices of the 16S rRNA. In terms of biological role, forms an intersubunit bridge (bridge B4) with the 23S rRNA of the 50S subunit in the ribosome. The chain is Small ribosomal subunit protein uS15 from Synechococcus sp. (strain CC9311).